Here is a 515-residue protein sequence, read N- to C-terminus: 2,3-bisphosphoglycerate-independent phosphoglycerate mutase (515 aa).

The Mn(2+) site is built by D14 and S64. S64 (phosphoserine intermediate) is an active-site residue. Substrate contacts are provided by residues H125, 155-156 (RD), R187, R193, 263-266 (RADR), and K337. Residues D404, H408, D445, H446, and H464 each coordinate Mn(2+).

Belongs to the BPG-independent phosphoglycerate mutase family. Monomer. Requires Mn(2+) as cofactor.

It catalyses the reaction (2R)-2-phosphoglycerate = (2R)-3-phosphoglycerate. It functions in the pathway carbohydrate degradation; glycolysis; pyruvate from D-glyceraldehyde 3-phosphate: step 3/5. In terms of biological role, catalyzes the interconversion of 2-phosphoglycerate and 3-phosphoglycerate. This Pseudomonas aeruginosa (strain UCBPP-PA14) protein is 2,3-bisphosphoglycerate-independent phosphoglycerate mutase.